Consider the following 120-residue polypeptide: Large ribosomal subunit protein bL12 (120 aa).

It belongs to the bacterial ribosomal protein bL12 family. In terms of assembly, homodimer. Part of the ribosomal stalk of the 50S ribosomal subunit. Forms a multimeric L10(L12)X complex, where L10 forms an elongated spine to which 2 to 4 L12 dimers bind in a sequential fashion. Binds GTP-bound translation factors.

In terms of biological role, forms part of the ribosomal stalk which helps the ribosome interact with GTP-bound translation factors. Is thus essential for accurate translation. In Haemophilus ducreyi (strain 35000HP / ATCC 700724), this protein is Large ribosomal subunit protein bL12.